A 340-amino-acid polypeptide reads, in one-letter code: Nucleoid-associated protein PSPA7_4451 (340 aa).

It belongs to the YejK family.

It is found in the cytoplasm. The protein localises to the nucleoid. The protein is Nucleoid-associated protein PSPA7_4451 of Pseudomonas paraeruginosa (strain DSM 24068 / PA7) (Pseudomonas aeruginosa (strain PA7)).